The primary structure comprises 182 residues: Isopentenyl-diphosphate Delta-isomerase (182 aa).

The Mn(2+) site is built by His-25 and His-32. Positions 30–164 (LLHLAFSSWL…PWAFSPWMVM (135 aa)) constitute a Nudix hydrolase domain. The active site involves Cys-67. Cys-67 lines the Mg(2+) pocket. His-69 contacts Mn(2+). Glu-87 lines the Mg(2+) pocket. The Mn(2+) site is built by Glu-114 and Glu-116. Residue Glu-116 is part of the active site.

This sequence belongs to the IPP isomerase type 1 family. As to quaternary structure, homodimer. The cofactor is Mg(2+). Mn(2+) is required as a cofactor.

It localises to the cytoplasm. It carries out the reaction isopentenyl diphosphate = dimethylallyl diphosphate. It functions in the pathway isoprenoid biosynthesis; dimethylallyl diphosphate biosynthesis; dimethylallyl diphosphate from isopentenyl diphosphate: step 1/1. In terms of biological role, catalyzes the 1,3-allylic rearrangement of the homoallylic substrate isopentenyl (IPP) to its highly electrophilic allylic isomer, dimethylallyl diphosphate (DMAPP). The sequence is that of Isopentenyl-diphosphate Delta-isomerase from Shigella boydii serotype 4 (strain Sb227).